A 153-amino-acid polypeptide reads, in one-letter code: 6,7-dimethyl-8-ribityllumazine synthase (153 aa).

Residues Phe-22, 56-58 (AFE), and 80-82 (AVI) each bind 5-amino-6-(D-ribitylamino)uracil. 85–86 (ST) is a binding site for (2S)-2-hydroxy-3-oxobutyl phosphate. His-88 acts as the Proton donor in catalysis. Phe-113 contributes to the 5-amino-6-(D-ribitylamino)uracil binding site. Arg-127 is a (2S)-2-hydroxy-3-oxobutyl phosphate binding site.

It belongs to the DMRL synthase family.

The catalysed reaction is (2S)-2-hydroxy-3-oxobutyl phosphate + 5-amino-6-(D-ribitylamino)uracil = 6,7-dimethyl-8-(1-D-ribityl)lumazine + phosphate + 2 H2O + H(+). It participates in cofactor biosynthesis; riboflavin biosynthesis; riboflavin from 2-hydroxy-3-oxobutyl phosphate and 5-amino-6-(D-ribitylamino)uracil: step 1/2. Its function is as follows. Catalyzes the formation of 6,7-dimethyl-8-ribityllumazine by condensation of 5-amino-6-(D-ribitylamino)uracil with 3,4-dihydroxy-2-butanone 4-phosphate. This is the penultimate step in the biosynthesis of riboflavin. The polypeptide is 6,7-dimethyl-8-ribityllumazine synthase (Clostridium botulinum (strain Alaska E43 / Type E3)).